The primary structure comprises 227 residues: Isopentenyl-diphosphate Delta-isomerase 1 (227 aa).

Residue K36 coordinates substrate. H40 and H51 together coordinate Mg(2+). The Nudix hydrolase domain maps to 49–199; sequence LLHRAFSVFL…EIKITPWFQI (151 aa). Residues R70 and K74 each contribute to the substrate site. C86 is an active-site residue. S87 is a binding site for substrate. E146 and E148 together coordinate Mg(2+). The active site involves E148. K176 is modified (N6-acetyllysine). Residues 225 to 227 carry the Microbody targeting signal motif; that stretch reads HRM.

The protein belongs to the IPP isomerase type 1 family. As to quaternary structure, monomer. Requires Mg(2+) as cofactor.

The protein resides in the peroxisome. It carries out the reaction isopentenyl diphosphate = dimethylallyl diphosphate. It functions in the pathway isoprenoid biosynthesis; dimethylallyl diphosphate biosynthesis; dimethylallyl diphosphate from isopentenyl diphosphate: step 1/1. Catalyzes the 1,3-allylic rearrangement of the homoallylic substrate isopentenyl (IPP) to its highly electrophilic allylic isomer, dimethylallyl diphosphate (DMAPP). The sequence is that of Isopentenyl-diphosphate Delta-isomerase 1 (IDI1) from Macaca fascicularis (Crab-eating macaque).